The chain runs to 615 residues: Chaperone protein HscA (615 aa).

It belongs to the heat shock protein 70 family.

In terms of biological role, chaperone involved in the maturation of iron-sulfur cluster-containing proteins. Has a low intrinsic ATPase activity which is markedly stimulated by HscB. Involved in the maturation of IscU. This Xenorhabdus nematophila (strain ATCC 19061 / DSM 3370 / CCUG 14189 / LMG 1036 / NCIMB 9965 / AN6) protein is Chaperone protein HscA.